The sequence spans 597 residues: TOX high mobility group box family member 4 (597 aa).

2 disordered regions span residues Gly-160–Lys-224 and Val-520–Pro-546. Positions Lys-207–Lys-217 are enriched in basic residues. The Nuclear localization signal signature appears at Lys-212–Lys-217. Positions Pro-222–Lys-290 form a DNA-binding region, HMG box.

Component of the PNUTS-PP1 phosphatase complex.

Its subcellular location is the nucleus. It localises to the chromosome. In terms of biological role, transcription factor that modulates cell fate reprogramming from the somatic state to the pluripotent and neuronal fate. Also acts as a regulatory component of protein phosphatase 1 (PP1) complexes. Component of the PNUTS-PP1 protein phosphatase complex, a PP1 complex that regulates RNA polymerase II transcription pause-release. PNUTS-PP1 also plays a role in the control of chromatin structure and cell cycle progression during the transition from mitosis into interphase. This Xenopus tropicalis (Western clawed frog) protein is TOX high mobility group box family member 4 (tox4).